The primary structure comprises 218 residues: Small ribosomal subunit protein uS3c (218 aa).

A KH type-2 domain is found at 39 to 109 (IRNYVKVNLS…QIRINVTELK (71 aa)).

The protein belongs to the universal ribosomal protein uS3 family. Part of the 30S ribosomal subunit.

Its subcellular location is the plastid. It is found in the chloroplast. The sequence is that of Small ribosomal subunit protein uS3c (rps3) from Rhodomonas salina (Cryptomonas salina).